The primary structure comprises 232 residues: Thiamine import ATP-binding protein ThiQ (232 aa).

An ABC transporter domain is found at 2-230 (LKLTDITWLY…KASASAILGI (229 aa)). 32–39 (GPSGAGKS) is a binding site for ATP.

Belongs to the ABC transporter superfamily. Thiamine importer (TC 3.A.1.19.1) family. In terms of assembly, the complex is composed of two ATP-binding proteins (ThiQ), two transmembrane proteins (ThiP) and a solute-binding protein (ThiB).

The protein localises to the cell inner membrane. The enzyme catalyses thiamine(out) + ATP + H2O = thiamine(in) + ADP + phosphate + H(+). Its function is as follows. Part of the ABC transporter complex ThiBPQ involved in thiamine import. Responsible for energy coupling to the transport system. This chain is Thiamine import ATP-binding protein ThiQ, found in Shigella boydii serotype 4 (strain Sb227).